Reading from the N-terminus, the 720-residue chain is Engulfment and cell motility protein 3 (720 aa).

The region spanning 307–479 (EQREQLQVLR…VVREQLARTL (173 aa)) is the ELMO domain. Residues 542–664 (RLCEGTLFRK…TDGLSALLGS (123 aa)) enclose the PH domain. An SH3-binding motif is present at residues 696–706 (PERPPPVPPPP).

Probably interacts directly with the SH3-domain of DOCK1 via its SH3-binding site. Part of a complex with DOCK1 and RAC1. Interacts with ADGRB3.

It is found in the cytoplasm. Functionally, involved in cytoskeletal rearrangements required for phagocytosis of apoptotic cells and cell motility. Acts in association with DOCK1 and CRK. Was initially proposed to be required in complex with DOCK1 to activate Rac Rho small GTPases. May enhance the guanine nucleotide exchange factor (GEF) activity of DOCK1. The protein is Engulfment and cell motility protein 3 (ELMO3) of Homo sapiens (Human).